A 499-amino-acid polypeptide reads, in one-letter code: Probable aspartyl protease At4g16563 (499 aa).

A signal peptide spans 1 to 26 (MKTCLIFFLYTTILQYYFHFSVSSLS). The 405-residue stretch at 83-487 (YLISLSVGSS…DLLNRRVGFA (405 aa)) folds into the Peptidase A1 domain. Asp101 is an active-site residue. Cysteines 111 and 119 form a disulfide. 2 N-linked (GlcNAc...) asparagine glycosylation sites follow: Asn175 and Asn211. Asp353 is a catalytic residue. A disulfide bond links Cys396 and Cys445. Asn400 and Asn415 each carry an N-linked (GlcNAc...) asparagine glycan.

Belongs to the peptidase A1 family.

This Arabidopsis thaliana (Mouse-ear cress) protein is Probable aspartyl protease At4g16563.